The sequence spans 267 residues: Probable aquaporin TIP3-2 (267 aa).

M1 bears the N-acetylmethionine mark. An N-acetylalanine; in Probable aquaporin TIP3-2, N-terminally processed modification is found at A2. The Cytoplasmic portion of the chain corresponds to 2-26 (ATSARRAYGFGRADEATHPDSIRAT). A helical transmembrane segment spans residues 27-47 (LAEFLSTFVFVFAGEGSILAL). Topologically, residues 48–66 (DKLYWDTAAHTGTNTPGGL) are vacuolar. Residues 67-87 (VLVALAHALALFAAVSAAINV) form a helical membrane-spanning segment. The Cytoplasmic segment spans residues 88–110 (SGGHVNPAVTFAALIGGRISVIR). An NPA 1 motif is present at residues 93-95 (NPA). A helical membrane pass occupies residues 111–131 (AIYYWVAQLIGAILACLLLRL). Over 132-151 (ATNGLRPVGFHVASGVSELH) the chain is Vacuolar. The helical transmembrane segment at 152-172 (GLLMEIILTFALVYVVYSTAI) threads the bilayer. Topologically, residues 173–178 (DPKRGS) are cytoplasmic. The chain crosses the membrane as a helical span at residues 179-199 (IGIIAPLAIGLIVGANILVGG). Topologically, residues 200 to 226 (PFDGASMNPARAFGPALVGWRWSNHWI) are vacuolar. Residues 207–209 (NPA) carry the NPA 2 motif. A helical transmembrane segment spans residues 227–247 (YWVGPFIGGALAALIYEYMII). The Cytoplasmic portion of the chain corresponds to 248–267 (PSVNEPPHHSTHQPLAPEDY).

Belongs to the MIP/aquaporin (TC 1.A.8) family. TIP (TC 1.A.8.10) subfamily. As to expression, predominantly expressed in developing seeds. Also expressed in rosette leaves.

The protein localises to the vacuole membrane. Its function is as follows. Aquaporins facilitate the transport of water and small neutral solutes across cell membranes. This Arabidopsis thaliana (Mouse-ear cress) protein is Probable aquaporin TIP3-2 (TIP3-2).